The sequence spans 197 residues: GCN5-related N-acetyltransferase 1, chloroplastic (197 aa).

The N-terminal 37 residues, 1–37 (MFLGGTISTPPASLRLRSTLNPQNAVTQSSSQATFPA), are a transit peptide targeting the chloroplast. Polar residues predominate over residues 23–34 (QNAVTQSSSQAT). Positions 23 to 46 (QNAVTQSSSQATFPAAMQRKPPSY) are disordered. In terms of domain architecture, N-acetyltransferase spans 58–195 (FLLRRTTEGL…GMVFIRKQRN (138 aa)). Residues 129-131 (VVV), 137-142 (SCGLGK), 165-167 (EPR), and Tyr172 contribute to the acetyl-CoA site. Catalysis depends on Tyr172, which acts as the Proton donor.

This sequence belongs to the acetyltransferase family. GNAT subfamily. In terms of assembly, oligomer. Autoacetylated. In terms of tissue distribution, expressed in green tissues. Accumulates mainly in flowers and young leaves, and, to a lower extent, in stems and mature leaves, but barely in roots.

The protein localises to the plastid. It is found in the chloroplast. The catalysed reaction is an N-terminal L-alpha-aminoacyl-[protein] + acetyl-CoA = N-terminal N(alpha)-acetyl-L-alpha-aminoacyl-[protein] + CoA + H(+). It carries out the reaction L-lysyl-[protein] + acetyl-CoA = N(6)-acetyl-L-lysyl-[protein] + CoA + H(+). It catalyses the reaction 5-methoxytryptamine + acetyl-CoA = melatonin + CoA + H(+). The enzyme catalyses serotonin + acetyl-CoA = N-acetylserotonin + CoA + H(+). Inhibited by 5-methoxytryptamine in vitro. In terms of biological role, protein acetyltransferase with dual specificity triggering both N-alpha-acetylation (NTA) and epsilon-lysine acetylation (KA), possibly with a low efficiency or toward specific plastid substrates. Involved in melatonin biosynthesis by catalyzing the formation of N-acetylserotonin (NAS) from serotonin and of melatonin (N-acetyl-5-methoxytryptamine) from 5-methoxytryptamine (5-MT). This Arabidopsis thaliana (Mouse-ear cress) protein is GCN5-related N-acetyltransferase 1, chloroplastic.